The following is a 195-amino-acid chain: Glutamyl-tRNA(Gln) amidotransferase subunit C, mitochondrial (195 aa).

The transit peptide at 1–18 directs the protein to the mitochondrion; it reads MNLSTIGFQVIFKQRLRC.

The protein belongs to the GatC family. Subunit of the heterotrimeric GatCAB amidotransferase (AdT) complex, composed of A, B and C subunits.

It is found in the mitochondrion. It catalyses the reaction L-glutamyl-tRNA(Gln) + L-glutamine + ATP + H2O = L-glutaminyl-tRNA(Gln) + L-glutamate + ADP + phosphate + H(+). Its function is as follows. Allows the formation of correctly charged Gln-tRNA(Gln) through the transamidation of misacylated Glu-tRNA(Gln) in the mitochondria. The reaction takes place in the presence of glutamine and ATP through an activated gamma-phospho-Glu-tRNA(Gln). This chain is Glutamyl-tRNA(Gln) amidotransferase subunit C, mitochondrial, found in Brugia malayi (Filarial nematode worm).